We begin with the raw amino-acid sequence, 123 residues long: U9-barytoxin-Tl1a (123 aa).

The signal sequence occupies residues 1–18 (MNTMITFLVLFVLTAANG). Residues 19-77 (APEANERKIPEAIHNEDQSLAEMAEELMFFLQQTEFEAPLLQEEEEAEXAEXRNSRERR) constitute a propeptide that is removed on maturation. Disulfide bonds link Cys-78/Cys-93, Cys-85/Cys-98, and Cys-92/Cys-112.

The protein belongs to the neurotoxin 14 (magi-1) family. 05 (ICK-7) subfamily. ICK-7 sub-subfamily. Expressed by the venom gland.

The protein resides in the secreted. In terms of biological role, ion channel inhibitor. The protein is U9-barytoxin-Tl1a of Trittame loki (Brush-footed trapdoor spider).